Reading from the N-terminus, the 484-residue chain is Probable glycine dehydrogenase (decarboxylating) subunit 2 (484 aa).

Lys-264 carries the post-translational modification N6-(pyridoxal phosphate)lysine.

The protein belongs to the GcvP family. C-terminal subunit subfamily. In terms of assembly, the glycine cleavage system is composed of four proteins: P, T, L and H. In this organism, the P 'protein' is a heterodimer of two subunits. Pyridoxal 5'-phosphate is required as a cofactor.

It carries out the reaction N(6)-[(R)-lipoyl]-L-lysyl-[glycine-cleavage complex H protein] + glycine + H(+) = N(6)-[(R)-S(8)-aminomethyldihydrolipoyl]-L-lysyl-[glycine-cleavage complex H protein] + CO2. Its function is as follows. The glycine cleavage system catalyzes the degradation of glycine. The P protein binds the alpha-amino group of glycine through its pyridoxal phosphate cofactor; CO(2) is released and the remaining methylamine moiety is then transferred to the lipoamide cofactor of the H protein. This Legionella pneumophila subsp. pneumophila (strain Philadelphia 1 / ATCC 33152 / DSM 7513) protein is Probable glycine dehydrogenase (decarboxylating) subunit 2.